The chain runs to 174 residues: Large ribosomal subunit protein uL10 (174 aa).

The protein belongs to the universal ribosomal protein uL10 family. Part of the ribosomal stalk of the 50S ribosomal subunit. The N-terminus interacts with L11 and the large rRNA to form the base of the stalk. The C-terminus forms an elongated spine to which L12 dimers bind in a sequential fashion forming a multimeric L10(L12)X complex.

In terms of biological role, forms part of the ribosomal stalk, playing a central role in the interaction of the ribosome with GTP-bound translation factors. The sequence is that of Large ribosomal subunit protein uL10 from Anaeromyxobacter sp. (strain Fw109-5).